Reading from the N-terminus, the 344-residue chain is Phosphate acyltransferase (344 aa).

The protein belongs to the PlsX family. As to quaternary structure, homodimer. Probably interacts with PlsY.

It localises to the cytoplasm. It catalyses the reaction a fatty acyl-[ACP] + phosphate = an acyl phosphate + holo-[ACP]. Its pathway is lipid metabolism; phospholipid metabolism. In terms of biological role, catalyzes the reversible formation of acyl-phosphate (acyl-PO(4)) from acyl-[acyl-carrier-protein] (acyl-ACP). This enzyme utilizes acyl-ACP as fatty acyl donor, but not acyl-CoA. The chain is Phosphate acyltransferase from Yersinia enterocolitica serotype O:8 / biotype 1B (strain NCTC 13174 / 8081).